Reading from the N-terminus, the 357-residue chain is MRPARALIDLQALRHNYQLARETSGVRALAVIKADAYGHGAVRCAQALEGEADGFAVACIEEALELRAAGIRAPVLLLEGFFEASELALIVEHDFWCVVHSLWQLEAIEQAAVAKPLTVWLKLDSGMHRVGLHPKDYQVAYQRLQASGKVEKIVLMSHFARADELDCPRSSEQVAVFEAARQGLGAEISLRNSPAVMGWPSVPSDWVRPGIMLYGSTPFEENNSVAARLQPVMTLESKVICVRELPAGEPVGYGARFITDRPMRIGVVAMGYADGYPRHAPTGTPVLVAGQRSRLLGRVSMDMLCVDLTDVPQAGLGSTVELWGKNILASDVAQAADTIPYQLFCNLRRVPLVYCEG.

K33 (proton acceptor; specific for D-alanine) is an active-site residue. The residue at position 33 (K33) is an N6-(pyridoxal phosphate)lysine. Position 129 (R129) interacts with substrate. The active-site Proton acceptor; specific for L-alanine is the Y253. M301 contributes to the substrate binding site.

This sequence belongs to the alanine racemase family. It depends on pyridoxal 5'-phosphate as a cofactor.

It carries out the reaction L-alanine = D-alanine. Its pathway is amino-acid biosynthesis; D-alanine biosynthesis; D-alanine from L-alanine: step 1/1. Its function is as follows. Catalyzes the interconversion of L-alanine and D-alanine. May also act on other amino acids. The protein is Alanine racemase (alr) of Pseudomonas fluorescens (strain ATCC BAA-477 / NRRL B-23932 / Pf-5).